Here is a 476-residue protein sequence, read N- to C-terminus: Aspartyl/glutamyl-tRNA(Asn/Gln) amidotransferase subunit B (476 aa).

It belongs to the GatB/GatE family. GatB subfamily. As to quaternary structure, heterotrimer of A, B and C subunits.

It catalyses the reaction L-glutamyl-tRNA(Gln) + L-glutamine + ATP + H2O = L-glutaminyl-tRNA(Gln) + L-glutamate + ADP + phosphate + H(+). The catalysed reaction is L-aspartyl-tRNA(Asn) + L-glutamine + ATP + H2O = L-asparaginyl-tRNA(Asn) + L-glutamate + ADP + phosphate + 2 H(+). Its function is as follows. Allows the formation of correctly charged Asn-tRNA(Asn) or Gln-tRNA(Gln) through the transamidation of misacylated Asp-tRNA(Asn) or Glu-tRNA(Gln) in organisms which lack either or both of asparaginyl-tRNA or glutaminyl-tRNA synthetases. The reaction takes place in the presence of glutamine and ATP through an activated phospho-Asp-tRNA(Asn) or phospho-Glu-tRNA(Gln). The polypeptide is Aspartyl/glutamyl-tRNA(Asn/Gln) amidotransferase subunit B (Clostridium botulinum (strain ATCC 19397 / Type A)).